A 418-amino-acid chain; its full sequence is Protein-lysine N-trimethyltransferase SMYD5 (418 aa).

The 332-residue stretch at 21–352 (VSVEVRFVSS…PGEEICISYL (332 aa)) folds into the SET domain. An MYND-type zinc finger spans residues 98–136 (PELCTVRKDLHQNCPHCQVMYCSAECRLAATEQYHQVLC). Position 351 (Tyr351) interacts with S-adenosyl-L-methionine. Positions 385 to 418 (ADEPNVTSEEEEEEEEEEEGEPEDAELGDEMTDV) are disordered.

It belongs to the class V-like SAM-binding methyltransferase superfamily. In terms of assembly, interacts with the N-CoR complex. Interacts with EHMT2 and CBX5. In terms of processing, ubiquitinated and degradaed by the proteasome in response to mild hypothermia (32 degrees Celsius), relieving repression of the SP1 gene.

The protein localises to the cytoplasm. The enzyme catalyses L-lysyl-[protein] + 3 S-adenosyl-L-methionine = N(6),N(6),N(6)-trimethyl-L-lysyl-[protein] + 3 S-adenosyl-L-homocysteine + 3 H(+). The catalysed reaction is L-lysyl(20)-[histone H4] + 3 S-adenosyl-L-methionine = N(6),N(6),N(6)-trimethyl-L-lysyl(20)-[histone H4] + 3 S-adenosyl-L-homocysteine + 3 H(+). It carries out the reaction L-lysyl(36)-[histone H3] + 3 S-adenosyl-L-methionine = N(6),N(6),N(6)-trimethyl-L-lysyl(36)-[histone H3] + 3 S-adenosyl-L-homocysteine + 3 H(+). Protein-lysine N-trimethyltransferase that specifically catalyzes trimethylation of 'Lys-22' of the RPL40/eL40 subunit of the 60S ribosome, thereby promoting translation elongation and protein synthesis. May also act as a histone methyltransferase in the context of histone octamers, but not on nucleosome substrates: trimethylates 'Lys-36' of histone H3 and 'Lys-20' of histone H4 to form H3K36me3 and H4K20me3, respectively. The histone methyltransferase activity, which is independent of its SET domain, is however unsure in vivo. In association with the NCoR corepressor complex, involved in the repression of toll-like receptor 4 (TLR4)-target inflammatory genes in macrophages, possibly by catalyzing the formation of H4K20me3 at the gene promoters. Plays an important role in embryonic stem (ES) cell self-renewal and differentiation. Maintains genome stability of ES cells during differentiation through regulation of heterochromatin formation and repression of endogenous repetitive DNA elements by promoting H4K20me3 marks. Acts as a regulator of the hypothermia response: its degradation in response to mild hypothermia relieves the formation of H3K36me3 at gene promoters, allowing expression of the neuroprotective gene SP1. This Homo sapiens (Human) protein is Protein-lysine N-trimethyltransferase SMYD5.